Consider the following 612-residue polypeptide: Capsid protein (612 aa).

Residues methionine 1–alanine 53 are disordered. A compositionally biased stretch (low complexity) spans arginine 11 to asparagine 23. Residues asparagine 24–leucine 34 show a composition bias toward basic residues.

Belongs to the tetravirus capsid protein family.

Its subcellular location is the virion. In terms of biological role, self-assembles to form an icosahedral capsid with a T=4 symmetry, about 35 nm in diameter, and consisting of 240 copies of the two structural proteins. The polypeptide is Capsid protein (Nudaurelia capensis beta virus (isolate Pine emperor moth/South Africa) (NbetaV)).